Here is a 180-residue protein sequence, read N- to C-terminus: Large ribosomal subunit protein uL6 (180 aa).

The protein belongs to the universal ribosomal protein uL6 family. As to quaternary structure, part of the 50S ribosomal subunit.

Its function is as follows. This protein binds to the 23S rRNA, and is important in its secondary structure. It is located near the subunit interface in the base of the L7/L12 stalk, and near the tRNA binding site of the peptidyltransferase center. The sequence is that of Large ribosomal subunit protein uL6 from Borrelia turicatae (strain 91E135).